The primary structure comprises 96 residues: Glutamyl-tRNA(Gln) amidotransferase subunit C (96 aa).

The protein belongs to the GatC family. As to quaternary structure, heterotrimer of A, B and C subunits.

It catalyses the reaction L-glutamyl-tRNA(Gln) + L-glutamine + ATP + H2O = L-glutaminyl-tRNA(Gln) + L-glutamate + ADP + phosphate + H(+). The catalysed reaction is L-aspartyl-tRNA(Asn) + L-glutamine + ATP + H2O = L-asparaginyl-tRNA(Asn) + L-glutamate + ADP + phosphate + 2 H(+). Allows the formation of correctly charged Asn-tRNA(Asn) or Gln-tRNA(Gln) through the transamidation of misacylated Asp-tRNA(Asn) or Glu-tRNA(Gln) in organisms which lack either or both of asparaginyl-tRNA or glutaminyl-tRNA synthetases. The reaction takes place in the presence of glutamine and ATP through an activated phospho-Asp-tRNA(Asn) or phospho-Glu-tRNA(Gln). The protein is Glutamyl-tRNA(Gln) amidotransferase subunit C of Pseudomonas aeruginosa (strain ATCC 15692 / DSM 22644 / CIP 104116 / JCM 14847 / LMG 12228 / 1C / PRS 101 / PAO1).